A 144-amino-acid polypeptide reads, in one-letter code: MLLPKRVKYRRQHRPKTTGRSKGGNEVTFGEYGLQATTAAWITSRQIESARIAMTRYMKRGGKVWIKIFPHTPYTKKPLEVRMGSGKGAVEGWVAVVKPGRIMFEIAGVPEEVAREALRLASHKLPVKTKFVKREELGGDTNES.

Over residues methionine 1–glycine 19 the composition is skewed to basic residues. The interval methionine 1–glutamate 26 is disordered.

Belongs to the universal ribosomal protein uL16 family. Part of the 50S ribosomal subunit.

Its function is as follows. Binds 23S rRNA and is also seen to make contacts with the A and possibly P site tRNAs. This chain is Large ribosomal subunit protein uL16, found in Macrococcus caseolyticus (strain JCSC5402) (Macrococcoides caseolyticum).